The following is an 882-amino-acid chain: DNA mismatch repair protein MutS (882 aa).

629–636 (GPNMGGKS) provides a ligand contact to ATP.

Belongs to the DNA mismatch repair MutS family.

In terms of biological role, this protein is involved in the repair of mismatches in DNA. It is possible that it carries out the mismatch recognition step. This protein has a weak ATPase activity. This is DNA mismatch repair protein MutS from Ralstonia nicotianae (strain ATCC BAA-1114 / GMI1000) (Ralstonia solanacearum).